Consider the following 166-residue polypeptide: Ribosome maturation factor RimP (166 aa).

The protein belongs to the RimP family.

Its subcellular location is the cytoplasm. Its function is as follows. Required for maturation of 30S ribosomal subunits. This is Ribosome maturation factor RimP from Psychrobacter arcticus (strain DSM 17307 / VKM B-2377 / 273-4).